The primary structure comprises 1045 residues: Extracellular serine protease (1045 aa).

A signal peptide spans 1–27 (MILNKRLKLAYCVFLGCYGLSIHSSLA). The 349-residue stretch at 49–397 (QWGLEAISAE…WGRVNLRDAI (349 aa)) folds into the Peptidase S8 domain. Catalysis depends on charge relay system residues Asp-76, His-112, and Ser-341. Residues 646–1045 (SLASTENEKA…SVNAGLTWRF (400 aa)) constitute a propeptide, translocator domain; removed in mature form. Residues 769–1045 (IKADDNGAWA…SVNAGLTWRF (277 aa)) form the Autotransporter domain.

The protein belongs to the peptidase S8 family.

The protein localises to the secreted. The sequence is that of Extracellular serine protease from Serratia marcescens.